A 354-amino-acid chain; its full sequence is Protein RecA (354 aa).

67-74 (GPESSGKT) contacts ATP.

It belongs to the RecA family.

The protein localises to the cytoplasm. In terms of biological role, can catalyze the hydrolysis of ATP in the presence of single-stranded DNA, the ATP-dependent uptake of single-stranded DNA by duplex DNA, and the ATP-dependent hybridization of homologous single-stranded DNAs. It interacts with LexA causing its activation and leading to its autocatalytic cleavage. The chain is Protein RecA from Chlamydia muridarum (strain MoPn / Nigg).